We begin with the raw amino-acid sequence, 235 residues long: Claudin-15 (235 aa).

Residue Met1 is a topological domain, cytoplasmic. The helical transmembrane segment at Leu2–Leu24 threads the bilayer. The Extracellular segment spans residues Ala25–Tyr74. Cys52 and Cys62 form a disulfide bridge. The helical transmembrane segment at Ile75 to Gly99 threads the bilayer. Over Leu100–Lys115 the chain is Cytoplasmic. Ser111 is modified (phosphoserine). The helical transmembrane segment at Leu116 to Phe140 threads the bilayer. At Asn141 to Gly159 the chain is on the extracellular side. Residues Phe146–Phe147 form an important for the formation of tight-junction strand-like structures region. A helical membrane pass occupies residues Pro160–Asn182. The Cytoplasmic portion of the chain corresponds to Cys183 to Val235. Phosphoserine is present on residues Ser218 and Ser225.

This sequence belongs to the claudin family. As to quaternary structure, can form homo- and heteropolymeric tight junction strands. In terms of processing, palmitoylated.

The protein localises to the cell junction. It localises to the tight junction. Its subcellular location is the cell membrane. The enzyme catalyses Na(+)(in) = Na(+)(out). It carries out the reaction K(+)(in) = K(+)(out). The catalysed reaction is Cs(+)(in) = Cs(+)(out). It catalyses the reaction Rb(+)(in) = Rb(+)(out). The enzyme catalyses Li(+)(in) = Li(+)(out). It carries out the reaction NH4(+)(in) = NH4(+)(out). The catalysed reaction is methylamine(out) = methylamine(in). It catalyses the reaction H2O(in) = H2O(out). In terms of biological role, forms paracellular channels: polymerizes in tight junction strands with cation- and water-selective channels through the strands, conveying epithelial permeability in a process known as paracellular tight junction permeability. In intestinal epithelium, allows for sodium and water fluxes from the peritoneal side to the lumen of the intestine to regulate nutrient absorption and intestinal morphogenesis. This Bos taurus (Bovine) protein is Claudin-15 (CLDN15).